Here is an 821-residue protein sequence, read N- to C-terminus: Protein EFR3 homolog A (821 aa).

Residues Ser-360, Ser-363, Ser-422, and Ser-694 each carry the phosphoserine modification.

This sequence belongs to the EFR3 family. Component of a phosphatidylinositol 4-kinase (PI4K) complex, composed of PI4KA, EFR3 (EFR3A or EFR3B), TTC7 (TTC7A or TTC7B) and HYCC (HYCC1 or HYCC2). Post-translationally, palmitoylated at its N-terminus, anchoring the protein to the plasma membrane.

Its subcellular location is the cell membrane. It is found in the cytoplasm. The protein resides in the cytosol. Functionally, component of a complex required to localize phosphatidylinositol 4-kinase (PI4K) to the plasma membrane. The complex acts as a regulator of phosphatidylinositol 4-phosphate (PtdIns(4)P) synthesis. In the complex, EFR3A probably acts as the membrane-anchoring component. Also involved in responsiveness to G-protein-coupled receptors; it is however unclear whether this role is direct or indirect. This chain is Protein EFR3 homolog A, found in Homo sapiens (Human).